The sequence spans 62 residues: Large ribosomal subunit protein bL28 (62 aa).

This sequence belongs to the bacterial ribosomal protein bL28 family.

The protein is Large ribosomal subunit protein bL28 of Streptococcus mutans serotype c (strain ATCC 700610 / UA159).